The sequence spans 341 residues: Retinol dehydrogenase 10 (341 aa).

A helical; Signal-anchor transmembrane segment spans residues 3 to 23; it reads IVVEFFLVTFKVLWAFVLAAA. NADP(+) is bound at residue 40–64; it reads LITGAGSGLGRLFALEFARRRALLV. Ser-197 is a substrate binding site. Residue Tyr-210 is the Proton acceptor of the active site.

This sequence belongs to the short-chain dehydrogenases/reductases (SDR) family. Detected in retina, entire eyecups and in liver (at protein level).

It localises to the microsome membrane. Its subcellular location is the endoplasmic reticulum membrane. The enzyme catalyses all-trans-retinol + NADP(+) = all-trans-retinal + NADPH + H(+). The protein operates within cofactor metabolism; retinol metabolism. Retinol dehydrogenase with a clear preference for NADP. Converts all-trans-retinol to all-trans-retinal. This is Retinol dehydrogenase 10 (Rdh10) from Rattus norvegicus (Rat).